The following is a 317-amino-acid chain: UV DNA damage endonuclease (317 aa).

It belongs to the uve1/UvsE family.

Component in a DNA repair pathway. Removal of UV LIGHT damaged nucleotides. Recognizes pyrimidine dimers and cleave a phosphodiester bond immediately 5' to the lesion. This Bacillus cereus (strain ATCC 10987 / NRS 248) protein is UV DNA damage endonuclease.